Consider the following 370-residue polypeptide: Peptidyl-prolyl cis-trans isomerase D (370 aa).

Serine 5 is modified (phosphoserine). In terms of domain architecture, PPIase cyclophilin-type spans 19-183 (FFDVDIGGER…KLCVIAECGE (165 aa)). Residue lysine 171 is modified to N6-acetyllysine. The interval 185–215 (KEGDDWGIFPKDGSGDSHPDFPEDADVDLKD) is chaperone activity. A Phosphoserine modification is found at serine 198. The segment at 214–370 (KDVDKILLIS…EKAAYAKMFA (157 aa)) is interaction with HSP90AB1. TPR repeat units follow at residues 223–256 (SEDL…VEGS), 273–306 (LSCV…DPSN), and 307–340 (TKAL…APED).

The protein belongs to the cyclophilin-type PPIase family. PPIase D subfamily. Identified in ESR1 or NR3C1/GCR steroid receptor-chaperone complexes. Found in HSP90 chaperone complexes with kinase clients LCK or EIF2AK1. Two monomers associate with one HSP90 homodimer. Interacts with HSP90AA1. Interacts with HSP90AB1; PPID and FKBP4 compete for binding to HSP90AB1 and the interaction is mutually exclusive with the PPID:HSPA8 interaction. Interacts with HSPA8; PPID and STIP1 but not FKBP4 compete for binding to HSPA8 and the interaction is mutually exclusive with the PPID:HSP90AB1 interaction. Interacts with S100A1 and S100A2; the interactions dissociate the PPID:HSP90AA1 interaction. Interacts with S100A6. Interacts with MYB, ILF2, XRCC6, RACK1 and RPS3. Interacts with cytoplasmic dynein 1 intermediate chain (DYNC1I1 or DYNC1I2). In terms of processing, the N-terminus is blocked. In terms of tissue distribution, detected in heart, thymis and brain.

The protein resides in the cytoplasm. Its subcellular location is the nucleus. It is found in the nucleolus. The protein localises to the nucleoplasm. It catalyses the reaction [protein]-peptidylproline (omega=180) = [protein]-peptidylproline (omega=0). Its activity is regulated as follows. Less sensitive to inhibition by cyclosporin A than is CYP-18. Functionally, PPIase that catalyzes the cis-trans isomerization of proline imidic peptide bonds in oligopeptides and may therefore assist protein folding. Proposed to act as a co-chaperone in HSP90 complexes such as in unligated steroid receptors heterocomplexes. Different co-chaperones seem to compete for association with HSP90 thus establishing distinct HSP90-co-chaperone-receptor complexes with the potential to exert tissue-specific receptor activity control. May have a preference for estrogen receptor complexes and is not found in glucocorticoid receptor complexes. May be involved in cytoplasmic dynein-dependent movement of the receptor from the cytoplasm to the nucleus. May regulate MYB by inhibiting its DNA-binding activity. Involved in regulation of AHR signaling by promoting the formation of the AHR:ARNT dimer; the function is independent of HSP90 but requires the chaperone activity. Involved in regulation of UV radiation-induced apoptosis. The polypeptide is Peptidyl-prolyl cis-trans isomerase D (Bos taurus (Bovine)).